Here is a 329-residue protein sequence, read N- to C-terminus: Palmitoyltransferase pfa3 (329 aa).

5 consecutive transmembrane segments (helical) span residues 14-34 (VLVILAKYCMQIIALSLMSGV), 49-69 (VGIIILFLYIMIVTCYVLTNL), 141-161 (FFFLECFYLNLYSICVLYSTF), 177-197 (AIYLVFWGFLFAFAVGMSIVM), and 243-263 (IMGKSPFLWLLPFPNSIGEGV). Residues 97–147 (RFCEKCQEYKCDRSHHCSQCNKCILRMDHHCMWFKNCVGFRNHKFFFLECF) enclose the DHHC domain.

The protein belongs to the DHHC palmitoyltransferase family. PFA3 subfamily. Autopalmitoylated.

It is found in the vacuole membrane. It localises to the golgi apparatus membrane. It carries out the reaction L-cysteinyl-[protein] + hexadecanoyl-CoA = S-hexadecanoyl-L-cysteinyl-[protein] + CoA. Its function is as follows. Palmitoyltransferase specific for VAC8. Palmitoylates VAC8 at one or more of its N-terminal cysteine residues, which is required for its proper membrane localization. The protein is Palmitoyltransferase pfa3 (pfa3) of Schizosaccharomyces pombe (strain 972 / ATCC 24843) (Fission yeast).